We begin with the raw amino-acid sequence, 48 residues long: Large ribosomal subunit protein bL32 (48 aa).

The segment at 1-20 (MAVPDRRVSKTRAAKRRTHY) is disordered. Positions 9–20 (SKTRAAKRRTHY) are enriched in basic residues.

It belongs to the bacterial ribosomal protein bL32 family.

This Helicobacter acinonychis (strain Sheeba) protein is Large ribosomal subunit protein bL32.